Consider the following 449-residue polypeptide: MFS acetylaranotin efflux transporter ataA (449 aa).

7 helical membrane-spanning segments follow: residues 6-26, 45-65, 67-87, 115-135, 155-175, 182-202, and 227-247; these read SVYVWLTVVVKDNTIIATAIP, YLLVTCMFQLIFGKLYGYFPI, WVFLAAIIIFEIGSAVCGAAP, FYINLPIGAVVIVVLLQFLHV, LGVVTFLPAIVCLLLALQWGG, NGRIIALFVLAGVLLIAFLAI, and LFMTLFAGAYFTIIYYLPIWF. Residue N252 is glycosylated (N-linked (GlcNAc...) asparagine). 5 consecutive transmembrane segments (helical) span residues 260–280, 287–307, 321–341, 349–369, and 420–440; these read IMCLPLMLSMVIFSFVAGGGV, VPFFYIATVLAAAGAGLMTTF, VLLGSGVGMGIQLPIIAVQAV, VGTAILTFCQTFGGAIFVSVA, and ALVSAWYLAVALFSVAVLGAV.

It belongs to the major facilitator superfamily.

Its subcellular location is the cell membrane. In terms of biological role, efflux pump that may provide the dual role of acetylaranotin export and self-protection by allowing the fungus to evade the harmful effect of its own acetylaranotin production. The protein is MFS acetylaranotin efflux transporter ataA of Aspergillus terreus (strain NIH 2624 / FGSC A1156).